The sequence spans 330 residues: Aspartate--ammonia ligase (330 aa).

The protein belongs to the class-II aminoacyl-tRNA synthetase family. AsnA subfamily.

The protein resides in the cytoplasm. It catalyses the reaction L-aspartate + NH4(+) + ATP = L-asparagine + AMP + diphosphate + H(+). The protein operates within amino-acid biosynthesis; L-asparagine biosynthesis; L-asparagine from L-aspartate (ammonia route): step 1/1. The protein is Aspartate--ammonia ligase of Escherichia coli O45:K1 (strain S88 / ExPEC).